The chain runs to 506 residues: Histidine ammonia-lyase (506 aa).

Residues 143–145 (ASG) constitute a cross-link (5-imidazolinone (Ala-Gly)). At S144 the chain carries 2,3-didehydroalanine (Ser).

This sequence belongs to the PAL/histidase family. Contains an active site 4-methylidene-imidazol-5-one (MIO), which is formed autocatalytically by cyclization and dehydration of residues Ala-Ser-Gly.

The protein localises to the cytoplasm. It catalyses the reaction L-histidine = trans-urocanate + NH4(+). The protein operates within amino-acid degradation; L-histidine degradation into L-glutamate; N-formimidoyl-L-glutamate from L-histidine: step 1/3. This Salmonella schwarzengrund (strain CVM19633) protein is Histidine ammonia-lyase.